We begin with the raw amino-acid sequence, 296 residues long: Transposase for insertion sequence element IS629 (296 aa).

The 161-residue stretch at 125-285 folds into the Integrase catalytic domain; it reads VAERPDQLWV…TPPAEAEKAY (161 aa).

Its function is as follows. Involved in the transposition of the insertion sequence. The protein is Transposase for insertion sequence element IS629 of Shigella sonnei.